The following is a 250-amino-acid chain: Aliphatic sulfonates import ATP-binding protein SsuB 2 (250 aa).

The 217-residue stretch at 13–229 (VRLQGLTRSF…SYRDPLLGEY (217 aa)) folds into the ABC transporter domain. Residue 45–52 (GHSGSGKS) participates in ATP binding.

Belongs to the ABC transporter superfamily. Aliphatic sulfonates importer (TC 3.A.1.17.2) family. In terms of assembly, the complex is composed of two ATP-binding proteins (SsuB), two transmembrane proteins (SsuC) and a solute-binding protein (SsuA).

It is found in the cell membrane. The enzyme catalyses ATP + H2O + aliphatic sulfonate-[sulfonate-binding protein]Side 1 = ADP + phosphate + aliphatic sulfonateSide 2 + [sulfonate-binding protein]Side 1.. In terms of biological role, part of the ABC transporter complex SsuABC involved in aliphatic sulfonates import. Responsible for energy coupling to the transport system. The chain is Aliphatic sulfonates import ATP-binding protein SsuB 2 from Streptomyces avermitilis (strain ATCC 31267 / DSM 46492 / JCM 5070 / NBRC 14893 / NCIMB 12804 / NRRL 8165 / MA-4680).